The primary structure comprises 150 residues: Avidin-related protein 2 (150 aa).

Positions 1-24 are cleaved as a signal peptide; it reads MVHATSPLLLLLLLSLALVAPSLS. An Avidin-like domain is found at 26-147; sequence RKCSLTGEWD…GNNDFTRQHT (122 aa). A disulfide bridge connects residues C28 and C105. Positions 36, 40, 57, 59, and 63 each coordinate biotin. N67 and N93 each carry an N-linked (GlcNAc...) asparagine glycan. Positions 95, 99, and 140 each coordinate biotin.

As to quaternary structure, homotetramer. Post-translationally, glycosylated.

Its subcellular location is the secreted. Functionally, forms a strong non-covalent specific complex with biotin. The sequence is that of Avidin-related protein 2 (AVR2) from Gallus gallus (Chicken).